Consider the following 124-residue polypeptide: Prefoldin subunit beta (124 aa).

Belongs to the prefoldin subunit beta family. Heterohexamer of two alpha and four beta subunits.

The protein localises to the cytoplasm. Functionally, molecular chaperone capable of stabilizing a range of proteins. Seems to fulfill an ATP-independent, HSP70-like function in archaeal de novo protein folding. This Pyrobaculum arsenaticum (strain DSM 13514 / JCM 11321 / PZ6) protein is Prefoldin subunit beta.